We begin with the raw amino-acid sequence, 156 residues long: 17.4 kDa class I heat shock protein (156 aa).

The sHSP domain maps to 42–156 (DVAAFTNAKV…PEVKSVDISG (115 aa)).

This sequence belongs to the small heat shock protein (HSP20) family. In terms of assembly, may form oligomeric structures. Binds to AKR2A.

It localises to the cytoplasm. This Arabidopsis thaliana (Mouse-ear cress) protein is 17.4 kDa class I heat shock protein (HSP17.4A).